The sequence spans 181 residues: Oligoribonuclease (181 aa).

Residues 8–171 (LIWIDLEMTG…DDIRESVGEL (164 aa)) form the Exonuclease domain. Y129 is an active-site residue.

The protein belongs to the oligoribonuclease family.

It localises to the cytoplasm. Its function is as follows. 3'-to-5' exoribonuclease specific for small oligoribonucleotides. The polypeptide is Oligoribonuclease (Serratia proteamaculans (strain 568)).